The chain runs to 114 residues: Large ribosomal subunit protein bL19 (114 aa).

Belongs to the bacterial ribosomal protein bL19 family.

This protein is located at the 30S-50S ribosomal subunit interface and may play a role in the structure and function of the aminoacyl-tRNA binding site. This chain is Large ribosomal subunit protein bL19, found in Clavibacter sepedonicus (Clavibacter michiganensis subsp. sepedonicus).